Reading from the N-terminus, the 156-residue chain is MRVFEGRYYGEGLKIAIVISRFNSAVTKELLDGALDALKRHEVKDENIDVIWVPGAMEIPHITRSIALKKKHDAIIALGAVIRGETYHFDVVANEVSKGIAAINLEVDVPVSFGIITSDTVEQALNRAGIKSGNKGFEAAMVALEMANLKRQIEAI.

Residues Phe22, 56-58 (AME), and 80-82 (AVI) each bind 5-amino-6-(D-ribitylamino)uracil. 85 to 86 (ET) contacts (2S)-2-hydroxy-3-oxobutyl phosphate. The active-site Proton donor is His88. 5-amino-6-(D-ribitylamino)uracil is bound at residue Phe113. Arg127 contributes to the (2S)-2-hydroxy-3-oxobutyl phosphate binding site.

The protein belongs to the DMRL synthase family.

It catalyses the reaction (2S)-2-hydroxy-3-oxobutyl phosphate + 5-amino-6-(D-ribitylamino)uracil = 6,7-dimethyl-8-(1-D-ribityl)lumazine + phosphate + 2 H2O + H(+). Its pathway is cofactor biosynthesis; riboflavin biosynthesis; riboflavin from 2-hydroxy-3-oxobutyl phosphate and 5-amino-6-(D-ribitylamino)uracil: step 1/2. Catalyzes the formation of 6,7-dimethyl-8-ribityllumazine by condensation of 5-amino-6-(D-ribitylamino)uracil with 3,4-dihydroxy-2-butanone 4-phosphate. This is the penultimate step in the biosynthesis of riboflavin. The protein is 6,7-dimethyl-8-ribityllumazine synthase of Kosmotoga olearia (strain ATCC BAA-1733 / DSM 21960 / TBF 19.5.1).